The sequence spans 241 residues: Pyridoxal phosphate phosphatase PHOSPHO2 (241 aa).

Asp-8 acts as the Nucleophile in catalysis. Mg(2+) is bound by residues Asp-8 and Asp-10. Asp-10 (proton donor) is an active-site residue. Residues Asp-19 and Asp-99 each coordinate substrate. A Mg(2+)-binding site is contributed by Asp-179.

Belongs to the HAD-like hydrolase superfamily. PHOSPHO family. The cofactor is Mg(2+).

It carries out the reaction pyridoxal 5'-phosphate + H2O = pyridoxal + phosphate. Functionally, phosphatase that has high activity toward pyridoxal 5'-phosphate (PLP). Also active at much lower level toward pyrophosphate, phosphoethanolamine (PEA), phosphocholine (PCho), phospho-l-tyrosine, fructose-6-phosphate, p-nitrophenyl phosphate, and h-glycerophosphate. The chain is Pyridoxal phosphate phosphatase PHOSPHO2 (Phospho2) from Rattus norvegicus (Rat).